The sequence spans 381 residues: MAIDSPSPATDSIRVMLVDDSAVVRGLVTRILEGEAGIQVVASVGNGQMALASLERNEIDVVILDIEMPVMDGLTALPKLLQIDPGLKVIMQSTLTLKGADVSLRAMQMGAADYIPKPTSTRDLAGGVDFKSELVTKIRALGQARRAGARPARPGGPPATRPVIASTSPRTPVPIHPPGPLQLRSNTPEPPDIIAIGSSTGGPQALFTVLGTMKAGTVRQPIVITQHMPATFTTILAEHIGRVSGWEAREAQDGEAIRGGRVYIAPGDFHMVVETKGTDKVLRLNKNPPENFCRPAVDPMLRSIAAAYGKRVLACILTGMGADGMKGGQAVVASGGTVIAQDEASSVVWGMPGAAATAGICSAVLPLPEIAPWIMKLAARR.

The Response regulatory domain occupies 14 to 132 (RVMLVDDSAV…DLAGGVDFKS (119 aa)). At Asp-65 the chain carries 4-aspartylphosphate. Residues 143–173 (QARRAGARPARPGGPPATRPVIASTSPRTPV) are disordered. Low complexity predominate over residues 144-153 (ARRAGARPAR). The region spanning 188 to 381 (PEPPDIIAIG…PWIMKLAARR (194 aa)) is the CheB-type methylesterase domain. Residues Ser-199, His-227, and Asp-323 contribute to the active site.

The protein belongs to the CheB family. Phosphorylated by CheA. Phosphorylation of the N-terminal regulatory domain activates the methylesterase activity.

The protein localises to the cytoplasm. It catalyses the reaction [protein]-L-glutamate 5-O-methyl ester + H2O = L-glutamyl-[protein] + methanol + H(+). The enzyme catalyses L-glutaminyl-[protein] + H2O = L-glutamyl-[protein] + NH4(+). Its function is as follows. Involved in chemotaxis. Part of a chemotaxis signal transduction system that modulates chemotaxis in response to various stimuli. Catalyzes the demethylation of specific methylglutamate residues introduced into the chemoreceptors (methyl-accepting chemotaxis proteins or MCP) by CheR. Also mediates the irreversible deamidation of specific glutamine residues to glutamic acid. The chain is Protein-glutamate methylesterase/protein-glutamine glutaminase 1 from Paramagnetospirillum magneticum (strain ATCC 700264 / AMB-1) (Magnetospirillum magneticum).